The sequence spans 248 residues: 2,3-bisphosphoglycerate-dependent phosphoglycerate mutase (248 aa).

Substrate-binding positions include 8–15, 21–22, R60, 87–90, K98, 114–115, and 183–184; these read RHGESAWN, TG, EKHY, RR, and GN. The active-site Tele-phosphohistidine intermediate is H9. E87 functions as the Proton donor/acceptor in the catalytic mechanism.

This sequence belongs to the phosphoglycerate mutase family. BPG-dependent PGAM subfamily.

It carries out the reaction (2R)-2-phosphoglycerate = (2R)-3-phosphoglycerate. The protein operates within carbohydrate degradation; glycolysis; pyruvate from D-glyceraldehyde 3-phosphate: step 3/5. Its function is as follows. Catalyzes the interconversion of 2-phosphoglycerate and 3-phosphoglycerate. The protein is 2,3-bisphosphoglycerate-dependent phosphoglycerate mutase of Bacteroides fragilis (strain ATCC 25285 / DSM 2151 / CCUG 4856 / JCM 11019 / LMG 10263 / NCTC 9343 / Onslow / VPI 2553 / EN-2).